The following is a 685-amino-acid chain: Dammaradiene synthase (685 aa).

PFTB repeat units follow at residues 82–123 (MDKM…RLLN) and 265–308 (IREA…DPVV). Catalysis depends on D400, which acts as the Proton donor. PFTB repeat units follow at residues 424-465 (ITRC…KAMV) and 621-672 (IGHG…ARYR).

The protein belongs to the terpene cyclase/mutase family.

It catalyses the reaction squalene = dammara-20,24-diene. Functionally, squalene cyclase producing the tetracyclic triterpene dammaradiene. This Dryopteris crassirhizoma (Thick stemmed wood fern) protein is Dammaradiene synthase (DCD).